The primary structure comprises 156 residues: ATP synthase subunit b (156 aa).

Residues 7–27 traverse the membrane as a helical segment; it reads LIGQTVAFIIFVWFCMKFVWP.

It belongs to the ATPase B chain family. As to quaternary structure, F-type ATPases have 2 components, F(1) - the catalytic core - and F(0) - the membrane proton channel. F(1) has five subunits: alpha(3), beta(3), gamma(1), delta(1), epsilon(1). F(0) has three main subunits: a(1), b(2) and c(10-14). The alpha and beta chains form an alternating ring which encloses part of the gamma chain. F(1) is attached to F(0) by a central stalk formed by the gamma and epsilon chains, while a peripheral stalk is formed by the delta and b chains.

The protein localises to the cell inner membrane. In terms of biological role, f(1)F(0) ATP synthase produces ATP from ADP in the presence of a proton or sodium gradient. F-type ATPases consist of two structural domains, F(1) containing the extramembraneous catalytic core and F(0) containing the membrane proton channel, linked together by a central stalk and a peripheral stalk. During catalysis, ATP synthesis in the catalytic domain of F(1) is coupled via a rotary mechanism of the central stalk subunits to proton translocation. Component of the F(0) channel, it forms part of the peripheral stalk, linking F(1) to F(0). The chain is ATP synthase subunit b from Shewanella sp. (strain ANA-3).